The following is a 97-amino-acid chain: UPF0235 protein APP7_1431 (97 aa).

The protein belongs to the UPF0235 family.

The chain is UPF0235 protein APP7_1431 from Actinobacillus pleuropneumoniae serotype 7 (strain AP76).